Here is a 119-residue protein sequence, read N- to C-terminus: Fluoride-specific ion channel FluC 2 (119 aa).

Helical transmembrane passes span 1 to 21 (MIFAVGFGASLGAVARYALTS) and 44 to 64 (GAFFLGLAFALRLPASVYAFL). The Na(+) site is built by glycine 70 and threonine 73. Residues 98-118 (LLASYLGGAVLLTCGYYLGSL) form a helical membrane-spanning segment.

Belongs to the fluoride channel Fluc/FEX (TC 1.A.43) family.

Its subcellular location is the cell membrane. It catalyses the reaction fluoride(in) = fluoride(out). With respect to regulation, na(+) is not transported, but it plays an essential structural role and its presence is essential for fluoride channel function. Functionally, fluoride-specific ion channel. Important for reducing fluoride concentration in the cell, thus reducing its toxicity. This chain is Fluoride-specific ion channel FluC 2, found in Lactobacillus delbrueckii subsp. bulgaricus (strain ATCC 11842 / DSM 20081 / BCRC 10696 / JCM 1002 / NBRC 13953 / NCIMB 11778 / NCTC 12712 / WDCM 00102 / Lb 14).